The chain runs to 184 residues: Ribosome-recycling factor (184 aa).

It belongs to the RRF family.

It localises to the cytoplasm. Functionally, responsible for the release of ribosomes from messenger RNA at the termination of protein biosynthesis. May increase the efficiency of translation by recycling ribosomes from one round of translation to another. The protein is Ribosome-recycling factor of Bifidobacterium adolescentis (strain ATCC 15703 / DSM 20083 / NCTC 11814 / E194a).